The following is a 463-amino-acid chain: MHEKLTTRFAPSPTGYLHIGGLRTALYNYLYARKNGGNFLLRIEDTDLKRNSKEATKAIIEAFKWCGLEHDGEVTYQSERFDLYKEYVKKLLDEGKAYYCYMSKEELEELRAKQEAAKERPRYDGRYREFTGTPPQGIEPVVRIKAPQSGEIVFKDGVKGEVRFKAEDIMDDFIIARSDGTPTYNFTVVIDDALMGVSDVIRGDDHLSNTPKQIVLYEALGFKIPKFFHVAMIHGEDGKKLSKRHGATDVMEYKEMGILPQALLNFLVRLGWSHGDDEVFSLEDLKKLFDPYHINKSASCYNAKKLEWLNAHYIKTLPFEEINRQLKDLGFDLSVYEKAGFLLDLLRERAKTLHDIINGAKSIVNAPQNYDENAVQKFINKNNLELLQAFANTLKDQKTGKDFEDFTNDFLEKKEAKLKDLAQPIRIALTGSAVSPSIFEVLEFLEVDECKKRIENFLKVRGK.

Residues 11-21 (PSPTGYLHIGG) carry the 'HIGH' region motif. The short motif at 240-244 (KLSKR) is the 'KMSKS' region element. Lysine 243 provides a ligand contact to ATP.

It belongs to the class-I aminoacyl-tRNA synthetase family. Glutamate--tRNA ligase type 1 subfamily. In terms of assembly, monomer.

The protein localises to the cytoplasm. The enzyme catalyses tRNA(Glu) + L-glutamate + ATP = L-glutamyl-tRNA(Glu) + AMP + diphosphate. In terms of biological role, catalyzes the attachment of glutamate to tRNA(Glu) in a two-step reaction: glutamate is first activated by ATP to form Glu-AMP and then transferred to the acceptor end of tRNA(Glu). This Campylobacter jejuni (strain RM1221) protein is Glutamate--tRNA ligase 2.